A 120-amino-acid polypeptide reads, in one-letter code: Hydrogenase maturation factor HypA (120 aa).

H2 serves as a coordination point for Ni(2+). Residues C73, H76, C89, and C92 each contribute to the Zn(2+) site.

This sequence belongs to the HypA/HybF family.

Its function is as follows. Involved in the maturation of [NiFe] hydrogenases. Required for nickel insertion into the metal center of the hydrogenase. The polypeptide is Hydrogenase maturation factor HypA (Deinococcus radiodurans (strain ATCC 13939 / DSM 20539 / JCM 16871 / CCUG 27074 / LMG 4051 / NBRC 15346 / NCIMB 9279 / VKM B-1422 / R1)).